A 120-amino-acid polypeptide reads, in one-letter code: Dense granule protein 5 (120 aa).

Positions 1–25 (MASVKRVVVAVMIVNVLALIFVGVA) are cleaved as a signal peptide. The tract at residues 27–59 (STRDVGSGGDDSEGARGREQQQVQQHEQNEDRS) is disordered. The chain crosses the membrane as a helical span at residues 76 to 93 (AVGLAAAVVAVVSLLRLL). Residues 100–109 (AIQEESKESA) show a composition bias toward basic and acidic residues. The interval 100–120 (AIQEESKESATAEEEEVAEEE) is disordered. Positions 110 to 120 (TAEEEEVAEEE) are enriched in acidic residues.

Its subcellular location is the secreted. The protein resides in the parasitophorous vacuole lumen. The protein localises to the parasitophorous vacuole membrane. It is found in the cytoplasmic vesicle. It localises to the secretory vesicle. In terms of biological role, plays a role in the function of the cyst and parasitophorous vacuole membranes and therefore in host-parasite interactions. The protein is Dense granule protein 5 (GRA5) of Toxoplasma gondii.